Here is a 110-residue protein sequence, read N- to C-terminus: Large ribosomal subunit protein uL22 (110 aa).

The protein belongs to the universal ribosomal protein uL22 family. In terms of assembly, part of the 50S ribosomal subunit.

Functionally, this protein binds specifically to 23S rRNA; its binding is stimulated by other ribosomal proteins, e.g. L4, L17, and L20. It is important during the early stages of 50S assembly. It makes multiple contacts with different domains of the 23S rRNA in the assembled 50S subunit and ribosome. The globular domain of the protein is located near the polypeptide exit tunnel on the outside of the subunit, while an extended beta-hairpin is found that lines the wall of the exit tunnel in the center of the 70S ribosome. The polypeptide is Large ribosomal subunit protein uL22 (Enterobacter sp. (strain 638)).